The chain runs to 402 residues: S-adenosylmethionine synthase (402 aa).

H15 lines the ATP pocket. D17 provides a ligand contact to Mg(2+). E43 contacts K(+). 2 residues coordinate L-methionine: E56 and Q99. Residues 99–109 (QSPDIAQGVDT) are flexible loop. ATP-binding positions include 174 to 176 (DGK), 247 to 248 (RF), D256, 262 to 263 (RK), A279, and K283. Position 256 (D256) interacts with L-methionine. K287 is an L-methionine binding site.

Belongs to the AdoMet synthase family. Homotetramer; dimer of dimers. The cofactor is Mg(2+). K(+) is required as a cofactor.

It localises to the cytoplasm. It catalyses the reaction L-methionine + ATP + H2O = S-adenosyl-L-methionine + phosphate + diphosphate. The protein operates within amino-acid biosynthesis; S-adenosyl-L-methionine biosynthesis; S-adenosyl-L-methionine from L-methionine: step 1/1. Catalyzes the formation of S-adenosylmethionine (AdoMet) from methionine and ATP. The overall synthetic reaction is composed of two sequential steps, AdoMet formation and the subsequent tripolyphosphate hydrolysis which occurs prior to release of AdoMet from the enzyme. The polypeptide is S-adenosylmethionine synthase (Streptomyces griseus subsp. griseus (strain JCM 4626 / CBS 651.72 / NBRC 13350 / KCC S-0626 / ISP 5235)).